The chain runs to 395 residues: Elongation factor Tu (395 aa).

The region spanning 10 to 204 is the tr-type G domain; sequence KSHVNVGTLG…AVDEYIPTPE (195 aa). The segment at 19–26 is G1; that stretch reads GHVDHGKT. 19–26 contacts GTP; the sequence is GHVDHGKT. Thr-26 provides a ligand contact to Mg(2+). The tract at residues 60 to 64 is G2; sequence GITIS. A G3 region spans residues 81 to 84; sequence DCPG. GTP contacts are provided by residues 81 to 85 and 136 to 139; these read DCPGH and NKTD. The segment at 136–139 is G4; sequence NKTD. The tract at residues 174–176 is G5; sequence SAL.

This sequence belongs to the TRAFAC class translation factor GTPase superfamily. Classic translation factor GTPase family. EF-Tu/EF-1A subfamily. Monomer.

Its subcellular location is the cytoplasm. The enzyme catalyses GTP + H2O = GDP + phosphate + H(+). In terms of biological role, GTP hydrolase that promotes the GTP-dependent binding of aminoacyl-tRNA to the A-site of ribosomes during protein biosynthesis. In Oceanobacillus iheyensis (strain DSM 14371 / CIP 107618 / JCM 11309 / KCTC 3954 / HTE831), this protein is Elongation factor Tu.